A 691-amino-acid chain; its full sequence is Elongation factor G (691 aa).

The tr-type G domain maps to 10-284 (KRLRNIGIAA…AVVDYLPSPL (275 aa)). GTP contacts are provided by residues 19-26 (AHIDAGKT), 83-87 (DTPGH), and 137-140 (NKMD).

Belongs to the TRAFAC class translation factor GTPase superfamily. Classic translation factor GTPase family. EF-G/EF-2 subfamily.

It is found in the cytoplasm. Functionally, catalyzes the GTP-dependent ribosomal translocation step during translation elongation. During this step, the ribosome changes from the pre-translocational (PRE) to the post-translocational (POST) state as the newly formed A-site-bound peptidyl-tRNA and P-site-bound deacylated tRNA move to the P and E sites, respectively. Catalyzes the coordinated movement of the two tRNA molecules, the mRNA and conformational changes in the ribosome. In Thermus thermophilus (strain ATCC 27634 / DSM 579 / HB8), this protein is Elongation factor G (fusA).